A 36-amino-acid chain; its full sequence is Photosystem I reaction center subunit VIII (36 aa).

A helical transmembrane segment spans residues 8–28 (SIFVPLVGLVFPAIAMASLFL).

This sequence belongs to the PsaI family.

The protein resides in the plastid. It is found in the chloroplast thylakoid membrane. May help in the organization of the PsaL subunit. The sequence is that of Photosystem I reaction center subunit VIII from Solanum bulbocastanum (Wild potato).